Here is a 654-residue protein sequence, read N- to C-terminus: Macrolide export ATP-binding/permease protein MacB (654 aa).

One can recognise an ABC transporter domain in the interval 6-244; that stretch reads LKVEDLTRRF…EQAAKTPSAS (239 aa). 42–49 lines the ATP pocket; sequence GASGSGKS. Helical transmembrane passes span 280 to 300, 529 to 549, 584 to 604, and 619 to 639; these read FLTMLGIIIGIASVVSVVALG, LLISAIAVISLIVGGIGVMNI, LVCLCGGIAGIGLAFLIGFAF, and SIIWAFICSTLIGIAFGFLPA.

It belongs to the ABC transporter superfamily. Macrolide exporter (TC 3.A.1.122) family. As to quaternary structure, homodimer. Part of the tripartite efflux system MacAB-TolC, which is composed of an inner membrane transporter, MacB, a periplasmic membrane fusion protein, MacA, and an outer membrane component, TolC. The complex forms a large protein conduit and can translocate molecules across both the inner and outer membranes. Interacts with MacA.

It is found in the cell inner membrane. In terms of biological role, part of the tripartite efflux system MacAB-TolC. MacB is a non-canonical ABC transporter that contains transmembrane domains (TMD), which form a pore in the inner membrane, and an ATP-binding domain (NBD), which is responsible for energy generation. Confers resistance against macrolides. The chain is Macrolide export ATP-binding/permease protein MacB from Vibrio parahaemolyticus serotype O3:K6 (strain RIMD 2210633).